A 453-amino-acid chain; its full sequence is tRNA-2-methylthio-N(6)-dimethylallyladenosine synthase (453 aa).

An MTTase N-terminal domain is found at 4–118; sequence KKFYIENYGC…IPNLINNFFK (115 aa). Residues Cys13, Cys49, Cys83, Cys156, Cys160, and Cys163 each contribute to the [4Fe-4S] cluster site. A Radical SAM core domain is found at 142 to 388; sequence EEKKITAFVT…NLQKTHSYYR (247 aa). The TRAM domain maps to 390 to 453; sequence RKYIGSIQDI…SATLVGDIYV (64 aa).

The protein belongs to the methylthiotransferase family. MiaB subfamily. In terms of assembly, monomer. It depends on [4Fe-4S] cluster as a cofactor.

It is found in the cytoplasm. The catalysed reaction is N(6)-dimethylallyladenosine(37) in tRNA + (sulfur carrier)-SH + AH2 + 2 S-adenosyl-L-methionine = 2-methylsulfanyl-N(6)-dimethylallyladenosine(37) in tRNA + (sulfur carrier)-H + 5'-deoxyadenosine + L-methionine + A + S-adenosyl-L-homocysteine + 2 H(+). In terms of biological role, catalyzes the methylthiolation of N6-(dimethylallyl)adenosine (i(6)A), leading to the formation of 2-methylthio-N6-(dimethylallyl)adenosine (ms(2)i(6)A) at position 37 in tRNAs that read codons beginning with uridine. This Karelsulcia muelleri (strain GWSS) (Sulcia muelleri) protein is tRNA-2-methylthio-N(6)-dimethylallyladenosine synthase.